The chain runs to 371 residues: S-adenosylmethionine:tRNA ribosyltransferase-isomerase (371 aa).

It belongs to the QueA family. Monomer.

It is found in the cytoplasm. It carries out the reaction 7-aminomethyl-7-carbaguanosine(34) in tRNA + S-adenosyl-L-methionine = epoxyqueuosine(34) in tRNA + adenine + L-methionine + 2 H(+). It functions in the pathway tRNA modification; tRNA-queuosine biosynthesis. In terms of biological role, transfers and isomerizes the ribose moiety from AdoMet to the 7-aminomethyl group of 7-deazaguanine (preQ1-tRNA) to give epoxyqueuosine (oQ-tRNA). This is S-adenosylmethionine:tRNA ribosyltransferase-isomerase from Rickettsia akari (strain Hartford).